The following is a 488-amino-acid chain: Palmitoyltransferase ZDHHC14 (488 aa).

Residues 1–60 (MPPGGGGPMKDCEYSQISTHSSSPMESPHKKKKIAARRKWEVFPGRNKFFCNGRIMMARQ) are Cytoplasmic-facing. Residues 61–81 (TGVFYLTLVLILVTSGLFFAF) traverse the membrane as a helical segment. The Lumenal segment spans residues 82–89 (DCPYLAVK). The helical transmembrane segment at 90–110 (ITPAIPAVAGILFFFVMGTLL) threads the bilayer. Residues 111 to 208 (RTSFSDPGVL…GNCVGKRNYR (98 aa)) are Cytoplasmic-facing. The 51-residue stretch at 165-215 (KYCFTCKIFRPPRASHCSLCDNCVERFDHHCPWVGNCVGKRNYRFFYMFIL) folds into the DHHC domain. Cys-195 functions as the S-palmitoyl cysteine intermediate in the catalytic mechanism. A helical membrane pass occupies residues 209 to 229 (FFYMFILSLSFLTVFIFAFVI). Over 230–255 (THVILRSQQTGFLNALKDSPASVLEA) the chain is Lumenal. A helical transmembrane segment spans residues 256 to 276 (VVCFFSVWSIVGLSGFHTYLI). The Cytoplasmic portion of the chain corresponds to 277 to 488 (SSNQTTNEDI…VRGLVKLSSV (212 aa)). A Phosphoserine modification is found at Ser-455.

The protein belongs to the DHHC palmitoyltransferase family. ERF2/ZDHHC9 subfamily. In terms of tissue distribution, widely expressed.

The protein localises to the endoplasmic reticulum membrane. Its subcellular location is the golgi apparatus. The protein resides in the golgi stack membrane. The catalysed reaction is L-cysteinyl-[protein] + hexadecanoyl-CoA = S-hexadecanoyl-L-cysteinyl-[protein] + CoA. Palmitoyltransferase that could catalyze the addition of palmitate onto various protein substrates. May have a palmitoyltransferase activity toward the beta-2 adrenergic receptor/ADRB2 and thereby regulate G protein-coupled receptor signaling. May play a role in cell differentiation and apoptosis. The sequence is that of Palmitoyltransferase ZDHHC14 from Homo sapiens (Human).